Consider the following 113-residue polypeptide: Nucleoid-associated protein ROP_41370 (113 aa).

This sequence belongs to the YbaB/EbfC family. Homodimer.

Its subcellular location is the cytoplasm. The protein localises to the nucleoid. Functionally, binds to DNA and alters its conformation. May be involved in regulation of gene expression, nucleoid organization and DNA protection. In Rhodococcus opacus (strain B4), this protein is Nucleoid-associated protein ROP_41370.